The following is a 407-amino-acid chain: Na(+)-translocating NADH-quinone reductase subunit F (407 aa).

The helical transmembrane segment at 3–23 threads the bilayer; the sequence is IILGVVMFTLIVLALTVMILF. A 2Fe-2S ferredoxin-type domain is found at 32–126; it reads GDITIDINED…NLKIELPEEI (95 aa). [2Fe-2S] cluster-binding residues include C69, C75, C78, and C110. The FAD-binding FR-type domain maps to 129–269; the sequence is VKKWECEVIS…SGPFGEFFAK (141 aa).

It belongs to the NqrF family. In terms of assembly, composed of six subunits; NqrA, NqrB, NqrC, NqrD, NqrE and NqrF. It depends on [2Fe-2S] cluster as a cofactor. The cofactor is FAD.

It localises to the cell inner membrane. The catalysed reaction is a ubiquinone + n Na(+)(in) + NADH + H(+) = a ubiquinol + n Na(+)(out) + NAD(+). Functionally, NQR complex catalyzes the reduction of ubiquinone-1 to ubiquinol by two successive reactions, coupled with the transport of Na(+) ions from the cytoplasm to the periplasm. The first step is catalyzed by NqrF, which accepts electrons from NADH and reduces ubiquinone-1 to ubisemiquinone by a one-electron transfer pathway. The polypeptide is Na(+)-translocating NADH-quinone reductase subunit F (Yersinia enterocolitica serotype O:8 / biotype 1B (strain NCTC 13174 / 8081)).